The following is a 370-amino-acid chain: Protein-glutamate methylesterase/protein-glutamine glutaminase 3 (370 aa).

The Response regulatory domain occupies 3–119; that stretch reads KVLIVDDSAL…SLNVSRIERE (117 aa). Residue aspartate 53 is modified to 4-aspartylphosphate. Residues 166 to 360 form the CheB-type methylesterase domain; the sequence is SLTEIGVVLI…GQLNAWMSRT (195 aa). Catalysis depends on residues serine 178, histidine 205, and aspartate 302.

Belongs to the CheB family. In terms of processing, phosphorylated by CheA. Phosphorylation of the N-terminal regulatory domain activates the methylesterase activity.

Its subcellular location is the cytoplasm. The enzyme catalyses [protein]-L-glutamate 5-O-methyl ester + H2O = L-glutamyl-[protein] + methanol + H(+). The catalysed reaction is L-glutaminyl-[protein] + H2O = L-glutamyl-[protein] + NH4(+). Involved in chemotaxis. Part of a chemotaxis signal transduction system that modulates chemotaxis in response to various stimuli. Catalyzes the demethylation of specific methylglutamate residues introduced into the chemoreceptors (methyl-accepting chemotaxis proteins or MCP) by CheR. Also mediates the irreversible deamidation of specific glutamine residues to glutamic acid. The protein is Protein-glutamate methylesterase/protein-glutamine glutaminase 3 of Rhodospirillum rubrum (strain ATCC 11170 / ATH 1.1.1 / DSM 467 / LMG 4362 / NCIMB 8255 / S1).